Consider the following 259-residue polypeptide: UPF0014 membrane protein slr1647 (259 aa).

A run of 7 helical transmembrane segments spans residues 4-24, 34-54, 55-75, 98-118, 128-148, 195-215, and 225-245; these read ALIE…GAAI, LTGQ…VVGY, FLAV…LAIM, LWLS…VVII, YLIP…SLAG, MMVV…LAGG, and ILIM…VTAT.

This sequence belongs to the UPF0014 family.

It localises to the cell membrane. This Synechocystis sp. (strain ATCC 27184 / PCC 6803 / Kazusa) protein is UPF0014 membrane protein slr1647.